The primary structure comprises 334 residues: B1 bradykinin receptor (334 aa).

The segment at 1–21 (MASQASLKLQPSNQSQQAPPN) is disordered. The Extracellular portion of the chain corresponds to 1–41 (MASQASLKLQPSNQSQQAPPNITSCEGAPEAWDLLCRVLPG). Positions 10 to 21 (QPSNQSQQAPPN) are enriched in low complexity. N-linked (GlcNAc...) asparagine glycans are attached at residues Asn13 and Asn21. Residues 42 to 62 (FVITVCFFGLLGNLLVLSFFL) form a helical membrane-spanning segment. Topologically, residues 63–80 (LPWRRWWQQRRQRLTIAE) are cytoplasmic. A helical transmembrane segment spans residues 81 to 101 (IYLANLAASDLVFVLGLPFWA). Residues 102-118 (ENVGNRFNWPFGSDLCR) lie on the Extracellular side of the membrane. The cysteines at positions 117 and 196 are disulfide-linked. The helical transmembrane segment at 119–139 (VVSGVIKANLFISIFLVVAIS) threads the bilayer. Topologically, residues 140–161 (QDRYRLLVYPMTSWGNRRRRQA) are cytoplasmic. The helical transmembrane segment at 162-182 (QVTCLLIWVAGGLLSTPTFLL) threads the bilayer. The Extracellular segment spans residues 183-214 (RSVKVVPDLNISACILLFPHEAWHFVRMVELN). N-linked (GlcNAc...) asparagine glycosylation occurs at Asn192. The helical transmembrane segment at 215-235 (VLGFLLPLAAILYFNFHILAS) threads the bilayer. Topologically, residues 236 to 258 (LRGQKEASRTRCGGPKDSKTMGL) are cytoplasmic. The chain crosses the membrane as a helical span at residues 259 to 279 (ILTLVASFLVCWAPYHFFAFL). Residues 280–302 (DFLVQVRVIQDCFWKELTDLGLQ) are Extracellular-facing. The helical transmembrane segment at 303–323 (LANFFAFVNSCLNPLIYVFAG) threads the bilayer. Over 324-334 (RLFKTRVLGTL) the chain is Cytoplasmic.

The protein belongs to the G-protein coupled receptor 1 family. Bradykinin receptor subfamily. BDKRB1 sub-subfamily. Expressed in heart, liver and lung.

It is found in the cell membrane. In terms of biological role, this is a receptor for bradykinin. Could be a factor in chronic pain and inflammation. The protein is B1 bradykinin receptor (Bdkrb1) of Mus musculus (Mouse).